Reading from the N-terminus, the 231-residue chain is MLVMTEYLLSAGICMAIVSILLIGMAISNVSKGQYAKRFFFFATSCLVLTLVVVSSLSSSANASQTDNGVNRSGSEDPTVYSATSTKKLHKEPATLIKAIDGDTVKLMYKGQPMTFRLLLVDTPETKHPKKGVEKYGPEASAFTKKMVENAKKIEVEFDKGQRTDKYGRGLAYIYADGKMVNEALVRQGLAKVAYVYKPNNTHEQHLRKSEAQAKKEKLNIWSEDNADSGQ.

A signal peptide spans 1–26; the sequence is MLVMTEYLLSAGICMAIVSILLIGMA. 2 propeptides span residues 27–63 and 64–82; these read ISNV…SANA and SQTD…TVYS. Polar residues predominate over residues 61–73; that stretch reads ANASQTDNGVNRS. Residues 61–86 form a disordered region; it reads ANASQTDNGVNRSGSEDPTVYSATST. D103 lines the Ca(2+) pocket. R117 is an active-site residue. Residues D122 and T123 each contribute to the Ca(2+) site. Catalysis depends on residues E125 and R169. Positions 203 to 219 are enriched in basic and acidic residues; that stretch reads HEQHLRKSEAQAKKEKL. Residues 203 to 231 are disordered; the sequence is HEQHLRKSEAQAKKEKLNIWSEDNADSGQ.

It belongs to the thermonuclease family. The cofactor is Ca(2+).

Its subcellular location is the secreted. It localises to the membrane. It carries out the reaction Endonucleolytic cleavage to nucleoside 3'-phosphates and 3'-phosphooligonucleotide end-products.. In terms of biological role, enzyme that catalyzes the hydrolysis of both DNA and RNA at the 5' position of the phosphodiester bond. This is Thermonuclease from Staphylococcus aureus.